The primary structure comprises 107 residues: U1-lycotoxin-Ls1a (107 aa).

Positions 1 to 20 (MMKVLVVVALLVTLISYSSS) are cleaved as a signal peptide. Residues 21–41 (EGIDDLEADELLSLMANEQTR) constitute a propeptide that is removed on maturation. Cystine bridges form between Cys-44-Cys-59, Cys-51-Cys-68, Cys-58-Cys-86, and Cys-70-Cys-84.

Belongs to the neurotoxin 19 (CSTX) family. 04 (U1-Lctx) subfamily. In terms of tissue distribution, expressed by the venom gland.

The protein localises to the secreted. The protein is U1-lycotoxin-Ls1a of Lycosa singoriensis (Wolf spider).